The primary structure comprises 346 residues: Phosphoribosylformylglycinamidine cyclo-ligase (346 aa).

This sequence belongs to the AIR synthase family.

It localises to the cytoplasm. The catalysed reaction is 2-formamido-N(1)-(5-O-phospho-beta-D-ribosyl)acetamidine + ATP = 5-amino-1-(5-phospho-beta-D-ribosyl)imidazole + ADP + phosphate + H(+). Its pathway is purine metabolism; IMP biosynthesis via de novo pathway; 5-amino-1-(5-phospho-D-ribosyl)imidazole from N(2)-formyl-N(1)-(5-phospho-D-ribosyl)glycinamide: step 2/2. The sequence is that of Phosphoribosylformylglycinamidine cyclo-ligase from Proteus mirabilis (strain HI4320).